Consider the following 424-residue polypeptide: MLDLKFIRDNLELVRENIKNRGLKLELDLLISFDDERRKLITKIGELNALRNENANAMKDNIGDSSRHYLIEKGKALKAEIMDLEERLGYLTSRLLVEHKRIPNISAPDVPVGVSEDENVVLKVSGNIPKFDFKPKDHLEIGIHLDLFDFEKAREVSGNKFYYLKNEAVFLELAMINFAFSKLKAKGFDLFITPDVAREFIVDGIGFNPRGAESNIYKIEDTDKYLVGTAEITLGGYYYNTILDLKSPLKMAGLSHCFRKEAGAAGQFSKGLYRVHQFSKVEMFCFCRSEDSDRIHNEFLELEEEIFIELEIPYRVLNVCSSDLGAPAYKKYDIEAWMPGRGENGDYGEVTSTSNCTDYQSRRLKIRYKEDGQNKFVHMINGTAIASTRTLIAILENFQDAKGGVRIPKSLVKYTGFDYISPKN.

An L-serine-binding site is contributed by 229–231 (TAE). Residues 259-261 (RKE) and Val-275 each bind ATP. Position 282 (Glu-282) interacts with L-serine. 349-352 (EVTS) is an ATP binding site. Thr-383 is a binding site for L-serine.

The protein belongs to the class-II aminoacyl-tRNA synthetase family. Type-1 seryl-tRNA synthetase subfamily. As to quaternary structure, homodimer. The tRNA molecule binds across the dimer.

The protein resides in the cytoplasm. It catalyses the reaction tRNA(Ser) + L-serine + ATP = L-seryl-tRNA(Ser) + AMP + diphosphate + H(+). It carries out the reaction tRNA(Sec) + L-serine + ATP = L-seryl-tRNA(Sec) + AMP + diphosphate + H(+). Its pathway is aminoacyl-tRNA biosynthesis; selenocysteinyl-tRNA(Sec) biosynthesis; L-seryl-tRNA(Sec) from L-serine and tRNA(Sec): step 1/1. In terms of biological role, catalyzes the attachment of serine to tRNA(Ser). Is also able to aminoacylate tRNA(Sec) with serine, to form the misacylated tRNA L-seryl-tRNA(Sec), which will be further converted into selenocysteinyl-tRNA(Sec). The protein is Serine--tRNA ligase of Borrelia recurrentis (strain A1).